The primary structure comprises 322 residues: MNSKFFGLVQKGTRSFFPSLNFCYTRNIMSVSASSLVPKDFRAFRIGLVQLANTKDKSENLQLARLKVLEAAKNGSNVIVLPEIFNSPYGTGYFNQYAEPIEESSPSYQALSSMAKDTKTYLFGGSIPERKDGKLYNTAMVFDPSGKLIAVHRKIHLFDIDIPGGVSFRESDSLSPGDAMTMVDTEYGKFGLGICYDIRFPELAMIAARNGCSVMIYPGAFNLSTGPLHWELLARARAVDNEMFVACCAPARDMNADYHSWGHSTVVDPFGKVIATTDEKPSIVYADIDPSVMSTARNSVPIYTQRRFDVYSEVLPALKKEE.

The CN hydrolase domain maps to 44–290 (FRIGLVQLAN…PSIVYADIDP (247 aa)). Residue Glu-83 is the Proton acceptor of the active site. Lys-154 (proton donor) is an active-site residue. Cys-195 functions as the Nucleophile in the catalytic mechanism.

It belongs to the carbon-nitrogen hydrolase superfamily. NIT1/NIT2 family.

The sequence is that of Hydrolase C26A3.11 from Schizosaccharomyces pombe (strain 972 / ATCC 24843) (Fission yeast).